The primary structure comprises 82 residues: Putative antitoxin Saci_0468 (82 aa).

This sequence belongs to the UPF0330 family.

Its function is as follows. Possibly the antitoxin component of a type II toxin-antitoxin (TA) system. This Sulfolobus acidocaldarius (strain ATCC 33909 / DSM 639 / JCM 8929 / NBRC 15157 / NCIMB 11770) protein is Putative antitoxin Saci_0468.